An 833-amino-acid chain; its full sequence is Scavenger receptor class F member 2 (833 aa).

Positions 1–33 (MEGAGSRGAGPARRQGARGLGLLLLLWLLPGLA) are cleaved as a signal peptide. At 34–433 (APQDLNPRGR…ACHLETNQRK (400 aa)) the chain is on the extracellular side. EGF-like domains lie at 63-102 (LGDECGIAVCEGNSTCSENEVCVRPGECRCRHGYFGANCD), 114-145 (CKERCSCHPHGQCEDVTGQCTCHARRWGARCE), 140-174 (WGARCEHACQCQHGTCHPRSGACRCEPGWWGAQCA), 175-204 (SACYCSATSRCDPQTGACLCHVGWWGRSCN), 205-233 (NQCACNSSPCEQQSGRCQCRERMFGARCD), and 228-262 (FGARCDRYCQCSHGRCHPVDGTCACDPGYRGKYCR). 18 cysteine pairs are disulfide-bonded: Cys-67–Cys-78, Cys-72–Cys-90, Cys-92–Cys-101, Cys-118–Cys-126, Cys-120–Cys-133, Cys-135–Cys-144, Cys-148–Cys-155, Cys-150–Cys-162, Cys-164–Cys-173, Cys-177–Cys-185, Cys-179–Cys-192, Cys-194–Cys-203, Cys-207–Cys-214, Cys-209–Cys-221, Cys-223–Cys-232, Cys-236–Cys-243, Cys-238–Cys-250, and Cys-252–Cys-261. N-linked (GlcNAc...) asparagine glycosylation is present at Asn-75. N-linked (GlcNAc...) asparagine glycans are attached at residues Asn-302 and Asn-357. The region spanning 364–395 (CAFVCSDCGSGHCDFQSGRCLCSPGVHGPHCN) is the EGF-like 7 domain. Intrachain disulfides connect Cys-368-Cys-376, Cys-371-Cys-383, and Cys-385-Cys-394. Asn-395 carries N-linked (GlcNAc...) asparagine glycosylation. A helical transmembrane segment spans residues 434-454 (GVMGAGALLTLLLGLLLSLLG). Residues 455–833 (CCCACRGKDS…SRAGTAPGAS (379 aa)) lie on the Cytoplasmic side of the membrane. 2 positions are modified to phosphoserine: Ser-538 and Ser-600. The tract at residues 578–833 (SLEPTGTSTP…SRAGTAPGAS (256 aa)) is disordered. At Tyr-615 the chain carries Phosphotyrosine. Residues 619-630 (ARREARPARTRN) are compositionally biased toward basic and acidic residues. Residues Ser-638, Ser-640, and Ser-695 each carry the phosphoserine modification. Position 712 is a phosphothreonine (Thr-712). Positions 748–761 (ELRDKTRSLGRAEK) are enriched in basic and acidic residues. The segment covering 781–798 (ASASEASGSEKAAASAPA) has biased composition (low complexity). The segment covering 804-816 (KKTPIQKPPRKKS) has biased composition (basic residues).

As to quaternary structure, homophilic and heterophilic interaction via its extracellular domain. Interacts with SCARF1. The heterophilic interaction with SCARF1, which is stronger than the homophilic interaction with itself, is suppressed by the presence of SCARF1 ligand such as Ac-LDL.

It localises to the membrane. In terms of biological role, probable adhesion protein, which mediates homophilic and heterophilic interactions. In contrast to SCARF1, it poorly mediates the binding and degradation of acetylated low density lipoprotein (Ac-LDL). The polypeptide is Scavenger receptor class F member 2 (Scarf2) (Mus musculus (Mouse)).